The primary structure comprises 96 residues: Co-chaperonin GroES (96 aa).

It belongs to the GroES chaperonin family. In terms of assembly, heptamer of 7 subunits arranged in a ring. Interacts with the chaperonin GroEL.

Its subcellular location is the cytoplasm. In terms of biological role, together with the chaperonin GroEL, plays an essential role in assisting protein folding. The GroEL-GroES system forms a nano-cage that allows encapsulation of the non-native substrate proteins and provides a physical environment optimized to promote and accelerate protein folding. GroES binds to the apical surface of the GroEL ring, thereby capping the opening of the GroEL channel. The polypeptide is Co-chaperonin GroES (Geotalea uraniireducens (strain Rf4) (Geobacter uraniireducens)).